The sequence spans 726 residues: Catalase-peroxidase (726 aa).

Residues 1–33 (MSTTDDTHNTLSTGKCPFHQGGHDRSAGAGTAS) are disordered. Residues 105–226 (WHGAGTYRSI…LGATEMGLIY (122 aa)) constitute a cross-link (tryptophyl-tyrosyl-methioninium (Trp-Tyr) (with M-252)). The active-site Proton acceptor is His-106. The segment at residues 226–252 (YVNPEGPDHSGEPLSAAAAIRATFGNM) is a cross-link (tryptophyl-tyrosyl-methioninium (Tyr-Met) (with W-105)). Heme b is bound at residue His-267.

This sequence belongs to the peroxidase family. Peroxidase/catalase subfamily. Homodimer or homotetramer. Heme b serves as cofactor. In terms of processing, formation of the three residue Trp-Tyr-Met cross-link is important for the catalase, but not the peroxidase activity of the enzyme.

The catalysed reaction is H2O2 + AH2 = A + 2 H2O. The enzyme catalyses 2 H2O2 = O2 + 2 H2O. Functionally, bifunctional enzyme with both catalase and broad-spectrum peroxidase activity. The protein is Catalase-peroxidase of Salmonella typhi.